We begin with the raw amino-acid sequence, 68 residues long: ATP synthase F(0) complex subunit 8 (68 aa).

The chain crosses the membrane as a helical span at residues 8–24; sequence TWFTTILSMFLTLFIIF. At K54 the chain carries N6-acetyllysine; alternate. K54 is modified (N6-succinyllysine; alternate). The residue at position 57 (K57) is an N6-acetyllysine.

Belongs to the ATPase protein 8 family. In terms of assembly, component of the ATP synthase complex composed at least of ATP5F1A/subunit alpha, ATP5F1B/subunit beta, ATP5MC1/subunit c (homooctomer), MT-ATP6/subunit a, MT-ATP8/subunit 8, ATP5ME/subunit e, ATP5MF/subunit f, ATP5MG/subunit g, ATP5MK/subunit k, ATP5MJ/subunit j, ATP5F1C/subunit gamma, ATP5F1D/subunit delta, ATP5F1E/subunit epsilon, ATP5PF/subunit F6, ATP5PB/subunit b, ATP5PD/subunit d, ATP5PO/subunit OSCP. ATP synthase complex consists of a soluble F(1) head domain (subunits alpha(3) and beta(3)) - the catalytic core - and a membrane F(0) domain - the membrane proton channel (subunits c, a, 8, e, f, g, k and j). These two domains are linked by a central stalk (subunits gamma, delta, and epsilon) rotating inside the F1 region and a stationary peripheral stalk (subunits F6, b, d, and OSCP). Interacts with PRICKLE3.

It localises to the mitochondrion membrane. Functionally, subunit 8, of the mitochondrial membrane ATP synthase complex (F(1)F(0) ATP synthase or Complex V) that produces ATP from ADP in the presence of a proton gradient across the membrane which is generated by electron transport complexes of the respiratory chain. ATP synthase complex consist of a soluble F(1) head domain - the catalytic core - and a membrane F(1) domain - the membrane proton channel. These two domains are linked by a central stalk rotating inside the F(1) region and a stationary peripheral stalk. During catalysis, ATP synthesis in the catalytic domain of F(1) is coupled via a rotary mechanism of the central stalk subunits to proton translocation. In vivo, can only synthesize ATP although its ATP hydrolase activity can be activated artificially in vitro. Part of the complex F(0) domain. This chain is ATP synthase F(0) complex subunit 8, found in Hippopotamus amphibius (Hippopotamus).